A 40-amino-acid chain; its full sequence is Photosystem II reaction center protein J (40 aa).

The chain crosses the membrane as a helical span at residues 8–28 (IPLCLIGTVAGIAVIGLVGVF).

It belongs to the PsbJ family. PSII is composed of 1 copy each of membrane proteins PsbA, PsbB, PsbC, PsbD, PsbE, PsbF, PsbH, PsbI, PsbJ, PsbK, PsbL, PsbM, PsbT, PsbX, PsbY, PsbZ, Psb30/Ycf12, at least 3 peripheral proteins of the oxygen-evolving complex and a large number of cofactors. It forms dimeric complexes.

It localises to the plastid. The protein resides in the chloroplast thylakoid membrane. Functionally, one of the components of the core complex of photosystem II (PSII). PSII is a light-driven water:plastoquinone oxidoreductase that uses light energy to abstract electrons from H(2)O, generating O(2) and a proton gradient subsequently used for ATP formation. It consists of a core antenna complex that captures photons, and an electron transfer chain that converts photonic excitation into a charge separation. This chain is Photosystem II reaction center protein J, found in Triticum aestivum (Wheat).